We begin with the raw amino-acid sequence, 263 residues long: Taurine import ATP-binding protein TauB (263 aa).

Positions 4 to 235 (LTAEAISLSF…RYAAGETVRS (232 aa)) constitute an ABC transporter domain. 40–47 (GPSGCGKS) is an ATP binding site.

The protein belongs to the ABC transporter superfamily. Taurine importer (TC 3.A.1.17.1) family. In terms of assembly, the complex is composed of two ATP-binding proteins (TauB), two transmembrane proteins (TauC) and a solute-binding protein (TauA).

It is found in the cell inner membrane. It carries out the reaction taurine(out) + ATP + H2O = taurine(in) + ADP + phosphate + H(+). Its function is as follows. Part of the ABC transporter complex TauABC involved in taurine import. Responsible for energy coupling to the transport system. The polypeptide is Taurine import ATP-binding protein TauB (Pseudomonas aeruginosa (strain UCBPP-PA14)).